Reading from the N-terminus, the 285-residue chain is Phosphatidylserine decarboxylase proenzyme (285 aa).

Active-site charge relay system; for autoendoproteolytic cleavage activity residues include Asp-89, His-146, and Ser-252. Ser-252 serves as the catalytic Schiff-base intermediate with substrate; via pyruvic acid; for decarboxylase activity. Position 252 is a pyruvic acid (Ser); by autocatalysis (Ser-252).

It belongs to the phosphatidylserine decarboxylase family. PSD-B subfamily. Prokaryotic type I sub-subfamily. In terms of assembly, heterodimer of a large membrane-associated beta subunit and a small pyruvoyl-containing alpha subunit. The cofactor is pyruvate. In terms of processing, is synthesized initially as an inactive proenzyme. Formation of the active enzyme involves a self-maturation process in which the active site pyruvoyl group is generated from an internal serine residue via an autocatalytic post-translational modification. Two non-identical subunits are generated from the proenzyme in this reaction, and the pyruvate is formed at the N-terminus of the alpha chain, which is derived from the carboxyl end of the proenzyme. The autoendoproteolytic cleavage occurs by a canonical serine protease mechanism, in which the side chain hydroxyl group of the serine supplies its oxygen atom to form the C-terminus of the beta chain, while the remainder of the serine residue undergoes an oxidative deamination to produce ammonia and the pyruvoyl prosthetic group on the alpha chain. During this reaction, the Ser that is part of the protease active site of the proenzyme becomes the pyruvoyl prosthetic group, which constitutes an essential element of the active site of the mature decarboxylase.

It is found in the cell membrane. It catalyses the reaction a 1,2-diacyl-sn-glycero-3-phospho-L-serine + H(+) = a 1,2-diacyl-sn-glycero-3-phosphoethanolamine + CO2. The protein operates within phospholipid metabolism; phosphatidylethanolamine biosynthesis; phosphatidylethanolamine from CDP-diacylglycerol: step 2/2. Functionally, catalyzes the formation of phosphatidylethanolamine (PtdEtn) from phosphatidylserine (PtdSer). The polypeptide is Phosphatidylserine decarboxylase proenzyme (Vibrio campbellii (strain ATCC BAA-1116)).